The primary structure comprises 310 residues: U-megalopygitoxin(8)-Mo15 (310 aa).

The first 27 residues, 1–27 (MARFSSKNLTKLFQYLVLSLLSPVAFG), serve as a signal peptide directing secretion.

Belongs to the megalysin family. Post-translationally, contains 3 disulfide bonds. In terms of tissue distribution, expressed by the venom apparatus.

It is found in the secreted. Its subcellular location is the target cell membrane. In terms of biological role, may function as a large pore-forming protein. This chain is U-megalopygitoxin(8)-Mo15, found in Megalopyge opercularis (Southern flannel moth).